Reading from the N-terminus, the 264-residue chain is GTP cyclohydrolase FolE2 (264 aa).

This sequence belongs to the GTP cyclohydrolase IV family.

It carries out the reaction GTP + H2O = 7,8-dihydroneopterin 3'-triphosphate + formate + H(+). It functions in the pathway cofactor biosynthesis; 7,8-dihydroneopterin triphosphate biosynthesis; 7,8-dihydroneopterin triphosphate from GTP: step 1/1. Converts GTP to 7,8-dihydroneopterin triphosphate. This chain is GTP cyclohydrolase FolE2, found in Vesicomyosocius okutanii subsp. Calyptogena okutanii (strain HA).